A 751-amino-acid polypeptide reads, in one-letter code: Photosystem I P700 chlorophyll a apoprotein A1 (751 aa).

The next 8 helical transmembrane spans lie at 73–96 (VFSAHFGQLGIIFIWLSGMYFHGA), 159–182 (LYTTAIGGLVMAAAMFFAGWFHYH), 198–222 (LNHHLAGLLGLGSLAWAGHQIHVSL), 294–312 (TVHHHLAIAVLFLVAGHQY), 349–372 (WHAQLAINLALFGSLSIIVSHHMY), 388–414 (LSLFTHHMWIGGFCIVGAGAHAGIFMV), 436–458 (AMISHLNWVCIFLGFHSFGLYIH), and 533–551 (FMVHHIHAFTIHVTVLILL). [4Fe-4S] cluster contacts are provided by C575 and C584. Helical transmembrane passes span 591 to 612 (HVFLGLFWMYNSISIVIFHFSW) and 665 to 687 (LSAYGLIFLGAHFVWAFSLMFLF). A chlorophyll a'-binding site is contributed by H676. The chlorophyll a site is built by M684 and Y692. Phylloquinone is bound at residue W693. A helical transmembrane segment spans residues 725–745 (AVGVAHYLLGGIATTWSFFLA).

Belongs to the PsaA/PsaB family. The PsaA/B heterodimer binds the P700 chlorophyll special pair and subsequent electron acceptors. PSI consists of a core antenna complex that captures photons, and an electron transfer chain that converts photonic excitation into a charge separation. The eukaryotic PSI reaction center is composed of at least 11 subunits. P700 is a chlorophyll a/chlorophyll a' dimer, A0 is one or more chlorophyll a, A1 is one or both phylloquinones and FX is a shared 4Fe-4S iron-sulfur center. serves as cofactor.

The protein localises to the plastid. It localises to the chloroplast thylakoid membrane. The enzyme catalyses reduced [plastocyanin] + hnu + oxidized [2Fe-2S]-[ferredoxin] = oxidized [plastocyanin] + reduced [2Fe-2S]-[ferredoxin]. Its function is as follows. PsaA and PsaB bind P700, the primary electron donor of photosystem I (PSI), as well as the electron acceptors A0, A1 and FX. PSI is a plastocyanin/cytochrome c6-ferredoxin oxidoreductase, converting photonic excitation into a charge separation, which transfers an electron from the donor P700 chlorophyll pair to the spectroscopically characterized acceptors A0, A1, FX, FA and FB in turn. Oxidized P700 is reduced on the lumenal side of the thylakoid membrane by plastocyanin or cytochrome c6. The protein is Photosystem I P700 chlorophyll a apoprotein A1 of Chlorella vulgaris (Green alga).